Consider the following 127-residue polypeptide: Small ribosomal subunit protein uS11 (127 aa).

The protein belongs to the universal ribosomal protein uS11 family. In terms of assembly, part of the 30S ribosomal subunit. Interacts with proteins S7 and S18. Binds to IF-3.

Functionally, located on the platform of the 30S subunit, it bridges several disparate RNA helices of the 16S rRNA. Forms part of the Shine-Dalgarno cleft in the 70S ribosome. The protein is Small ribosomal subunit protein uS11 of Streptococcus suis (strain 98HAH33).